The following is a 56-amino-acid chain: Conotoxin Cal6.41b (56 aa).

A signal peptide spans 1 to 23 (MSGSGAMLLGLLILVAMATSLDT). 3 disulfides stabilise this stretch: Cys27–Cys41, Cys33–Cys50, and Cys40–Cys54.

In terms of tissue distribution, expressed by the venom duct.

Its subcellular location is the secreted. Functionally, probable neurotoxin. The polypeptide is Conotoxin Cal6.41b (Californiconus californicus (California cone)).